The sequence spans 405 residues: Sarcosine oxidase subunit beta (405 aa).

The FAD site is built by Gly31, His32, Glu53, Asn61, Met62, Thr66, and Ile68. A Tele-8alpha-FMN histidine modification is found at His173. The FAD site is built by Val197, Gly354, Gly357, and Lys359.

It belongs to the SoxB family. Heterotetramer composed of subunits alpha (SoxA), beta (SoxB), gamma (SoxG) and delta (SoxD). It depends on FAD as a cofactor. FMN is required as a cofactor.

The protein resides in the cytoplasm. It carries out the reaction sarcosine + (6S)-5,6,7,8-tetrahydrofolate + O2 = (6R)-5,10-methylene-5,6,7,8-tetrahydrofolate + glycine + H2O2. The catalysed reaction is sarcosine + O2 + H2O = formaldehyde + glycine + H2O2. Its function is as follows. In the presence of tetrahydrofolate, catalyzes the oxidative demethylation of sarcosine to yield glycine, 5,10-methylenetetrahydrofolate and hydrogen peroxide. In the absence of tetrahydrofolate, catalyzes the oxidative demethylation of sarcosine to yield glycine, formaldehyde and hydrogen peroxide. This chain is Sarcosine oxidase subunit beta (soxB), found in Arthrobacter sp.